A 531-amino-acid chain; its full sequence is T-complex protein 1 subunit zeta (531 aa).

Residue alanine 2 is modified to N-acetylalanine. Lysine 5 is modified (N6-acetyllysine). An ADP-binding site is contributed by glycine 39. Position 39 (glycine 39) interacts with ATP. Aspartate 90 lines the Mg(2+) pocket. Residues glycine 91, threonine 92, threonine 93, serine 94, threonine 158, and lysine 159 each contribute to the ADP site. ATP-binding residues include glycine 91, threonine 92, and threonine 93. Lysine 199 is subject to N6-acetyllysine. Serine 205 is subject to Phosphoserine. Lysine 251 participates in a covalent cross-link: Glycyl lysine isopeptide (Lys-Gly) (interchain with G-Cter in SUMO2). Residues lysine 287, lysine 365, lysine 377, and lysine 388 each carry the N6-acetyllysine modification. Alanine 411 contributes to the ADP binding site. 4 residues coordinate ATP: alanine 411, glycine 412, aspartate 496, and lysine 501. Residue aspartate 496 coordinates ADP.

Belongs to the TCP-1 chaperonin family. In terms of assembly, component of the chaperonin-containing T-complex (TRiC), a hexadecamer composed of two identical back-to-back stacked rings enclosing a protein folding chamber. Each ring is made up of eight different subunits: TCP1/CCT1, CCT2, CCT3, CCT4, CCT5, CCT6A/CCT6, CCT7, CCT8. Interacts with PACRG.

It localises to the cytoplasm. It catalyses the reaction ATP + H2O = ADP + phosphate + H(+). In terms of biological role, component of the chaperonin-containing T-complex (TRiC), a molecular chaperone complex that assists the folding of actin, tubulin and other proteins upon ATP hydrolysis. The TRiC complex mediates the folding of WRAP53/TCAB1, thereby regulating telomere maintenance. This chain is T-complex protein 1 subunit zeta (CCT6), found in Oryctolagus cuniculus (Rabbit).